The sequence spans 411 residues: Trigger factor (411 aa).

Residues E162–I240 form the PPIase FKBP-type domain.

Belongs to the FKBP-type PPIase family. Tig subfamily.

It is found in the cytoplasm. It carries out the reaction [protein]-peptidylproline (omega=180) = [protein]-peptidylproline (omega=0). Its function is as follows. Involved in protein export. Acts as a chaperone by maintaining the newly synthesized protein in an open conformation. Functions as a peptidyl-prolyl cis-trans isomerase. The chain is Trigger factor from Thermodesulfovibrio yellowstonii (strain ATCC 51303 / DSM 11347 / YP87).